Consider the following 354-residue polypeptide: Ferrochelatase (354 aa).

The Fe cation site is built by His-214 and Glu-295.

The protein belongs to the ferrochelatase family.

The protein localises to the cytoplasm. The enzyme catalyses heme b + 2 H(+) = protoporphyrin IX + Fe(2+). The protein operates within porphyrin-containing compound metabolism; protoheme biosynthesis; protoheme from protoporphyrin-IX: step 1/1. In terms of biological role, catalyzes the ferrous insertion into protoporphyrin IX. This chain is Ferrochelatase, found in Burkholderia orbicola (strain MC0-3).